Consider the following 524-residue polypeptide: Bifunctional purine biosynthesis protein PurH (524 aa).

Positions 1 to 144 constitute an MGS-like domain; it reads MVRRALVSVS…KNAAHVGVVV (144 aa).

The protein belongs to the PurH family.

The enzyme catalyses (6R)-10-formyltetrahydrofolate + 5-amino-1-(5-phospho-beta-D-ribosyl)imidazole-4-carboxamide = 5-formamido-1-(5-phospho-D-ribosyl)imidazole-4-carboxamide + (6S)-5,6,7,8-tetrahydrofolate. It catalyses the reaction IMP + H2O = 5-formamido-1-(5-phospho-D-ribosyl)imidazole-4-carboxamide. It participates in purine metabolism; IMP biosynthesis via de novo pathway; 5-formamido-1-(5-phospho-D-ribosyl)imidazole-4-carboxamide from 5-amino-1-(5-phospho-D-ribosyl)imidazole-4-carboxamide (10-formyl THF route): step 1/1. Its pathway is purine metabolism; IMP biosynthesis via de novo pathway; IMP from 5-formamido-1-(5-phospho-D-ribosyl)imidazole-4-carboxamide: step 1/1. The chain is Bifunctional purine biosynthesis protein PurH from Anaeromyxobacter sp. (strain Fw109-5).